A 222-amino-acid chain; its full sequence is Cytochrome b6 (222 aa).

Residues 39 to 59 (IFYCLGGITLTCFLIQFATGF) form a helical membrane-spanning segment. Residue C42 coordinates heme c. Heme b-binding residues include H93 and H107. The next 3 membrane-spanning stretches (helical) occupy residues 97–117 (ASMMVLMMILHVFRVYLTGGF), 123–143 (LTWVTGVVLAVITVSFGVTGY), and 193–213 (LHTFVLPWLIAVFMLLHFLMI). The heme b site is built by H194 and H209.

Belongs to the cytochrome b family. PetB subfamily. The 4 large subunits of the cytochrome b6-f complex are cytochrome b6, subunit IV (17 kDa polypeptide, PetD), cytochrome f and the Rieske protein, while the 4 small subunits are PetG, PetL, PetM and PetN. The complex functions as a dimer. Heme b serves as cofactor. The cofactor is heme c.

The protein resides in the cellular thylakoid membrane. In terms of biological role, component of the cytochrome b6-f complex, which mediates electron transfer between photosystem II (PSII) and photosystem I (PSI), cyclic electron flow around PSI, and state transitions. The polypeptide is Cytochrome b6 (Cyanothece sp. (strain PCC 7425 / ATCC 29141)).